Reading from the N-terminus, the 561-residue chain is Putative transport protein YbjL (561 aa).

The next 5 membrane-spanning stretches (helical) occupy residues 8–28 (LLNG…LCLG), 32–52 (LGSI…LLGQ), 66–86 (FMLF…SIFF), 94–114 (MLAL…GKLF), and 158–178 (NLSL…IVGA). RCK C-terminal domains lie at 200 to 288 (RGLD…SFRN) and 292 to 373 (VFDR…RIGF). 5 consecutive transmembrane segments (helical) span residues 383 to 403 (LLAF…TFQF), 406 to 426 (FSFG…LGFM), 451 to 471 (VFMA…LGAI), 475 to 495 (MLIA…LFGA), and 540 to 560 (AIAN…WPGL).

Belongs to the AAE transporter (TC 2.A.81) family. YbjL subfamily.

Its subcellular location is the cell membrane. In Escherichia coli O139:H28 (strain E24377A / ETEC), this protein is Putative transport protein YbjL.